A 319-amino-acid chain; its full sequence is Transaldolase (319 aa).

The Schiff-base intermediate with substrate role is filled by Lys-125.

Belongs to the transaldolase family. Type 1 subfamily. In terms of assembly, homodimer.

It localises to the cytoplasm. It catalyses the reaction D-sedoheptulose 7-phosphate + D-glyceraldehyde 3-phosphate = D-erythrose 4-phosphate + beta-D-fructose 6-phosphate. Its pathway is carbohydrate degradation; pentose phosphate pathway; D-glyceraldehyde 3-phosphate and beta-D-fructose 6-phosphate from D-ribose 5-phosphate and D-xylulose 5-phosphate (non-oxidative stage): step 2/3. Its function is as follows. Transaldolase is important for the balance of metabolites in the pentose-phosphate pathway. The protein is Transaldolase of Ralstonia nicotianae (strain ATCC BAA-1114 / GMI1000) (Ralstonia solanacearum).